Consider the following 149-residue polypeptide: Large ribosomal subunit protein uL15 (149 aa).

2 stretches are compositionally biased toward basic residues: residues Met1–His14 and Arg21–Gly30. The tract at residues Met1 to Arg42 is disordered.

It belongs to the universal ribosomal protein uL15 family.

This is Large ribosomal subunit protein uL15 from Blumeria hordei (Barley powdery mildew).